The sequence spans 641 residues: Kelch-like protein 22 (641 aa).

The disordered stretch occupies residues 1–25 (MAEDLETMKPSQAPQQPSLPQGSSK). Over residues 10-24 (PSQAPQQPSLPQGSS) the composition is skewed to low complexity. The region spanning 50–117 (FDVVLKVEGK…IYTSDLALSV (68 aa)) is the BTB domain. Kelch repeat units lie at residues 299–349 (CVVG…VLNN), 350–399 (FVYL…VLGD), 400–446 (FLYA…ALDG), 448–493 (MYVA…ALQE), 494–544 (KIYL…VLAK), and 545–593 (KIFV…VLTL).

In terms of assembly, component of the BCR(KLHL22) E3 ubiquitin ligase complex, at least composed of cul3, klhl22 and rbx1.

It is found in the cytoplasm. The protein resides in the cytosol. It localises to the cytoskeleton. Its subcellular location is the microtubule organizing center. The protein localises to the centrosome. It is found in the spindle. The protein resides in the nucleus. It localises to the lysosome. The protein operates within protein modification; protein ubiquitination. Substrate-specific adapter of a BCR (BTB-CUL3-RBX1) E3 ubiquitin ligase complex. The BCR(KLHL22) ubiquitin ligase complex could mediate the monoubiquitination of PLK1 and regulate its activity in spindle assembly checkpoint (SAC) and chromosome segregation. The BCR(KLHL22) ubiquitin ligase complex may also be responsible for the ubiquitin-dependent proteasomal degradation of DEPDC5 and the activation of the TORC1 pathway. This Xenopus tropicalis (Western clawed frog) protein is Kelch-like protein 22 (klhl22).